We begin with the raw amino-acid sequence, 158 residues long: Nucleoside diphosphate kinase (158 aa).

Lys-16, Phe-64, Arg-92, Thr-98, Arg-109, and Asn-119 together coordinate ATP. The active-site Pros-phosphohistidine intermediate is the His-122.

It belongs to the NDK family. Mg(2+) is required as a cofactor.

The protein resides in the cytoplasm. It carries out the reaction a 2'-deoxyribonucleoside 5'-diphosphate + ATP = a 2'-deoxyribonucleoside 5'-triphosphate + ADP. The catalysed reaction is a ribonucleoside 5'-diphosphate + ATP = a ribonucleoside 5'-triphosphate + ADP. Its function is as follows. Major role in the synthesis of nucleoside triphosphates other than ATP. The ATP gamma phosphate is transferred to the NDP beta phosphate via a ping-pong mechanism, using a phosphorylated active-site intermediate. This Haloquadratum walsbyi (strain DSM 16790 / HBSQ001) protein is Nucleoside diphosphate kinase.